The following is a 120-amino-acid chain: DNA-directed RNA polymerase II subunit rpb11 (120 aa).

This sequence belongs to the archaeal Rpo11/eukaryotic RPB11/RPC19 RNA polymerase subunit family. In terms of assembly, component of the RNA polymerase II (Pol II) complex consisting of 12 subunits.

The protein localises to the nucleus. In terms of biological role, DNA-dependent RNA polymerase catalyzes the transcription of DNA into RNA using the four ribonucleoside triphosphates as substrates. Component of RNA polymerase II which synthesizes mRNA precursors and many functional non-coding RNAs. Pol II is the central component of the basal RNA polymerase II transcription machinery. It is composed of mobile elements that move relative to each other. RPB11 is part of the core element with the central large cleft. The chain is DNA-directed RNA polymerase II subunit rpb11 (polr2j) from Dictyostelium discoideum (Social amoeba).